The sequence spans 89 residues: Small ribosomal subunit protein uS15 (89 aa).

Belongs to the universal ribosomal protein uS15 family. As to quaternary structure, part of the 30S ribosomal subunit. Forms a bridge to the 50S subunit in the 70S ribosome, contacting the 23S rRNA.

Functionally, one of the primary rRNA binding proteins, it binds directly to 16S rRNA where it helps nucleate assembly of the platform of the 30S subunit by binding and bridging several RNA helices of the 16S rRNA. In terms of biological role, forms an intersubunit bridge (bridge B4) with the 23S rRNA of the 50S subunit in the ribosome. The sequence is that of Small ribosomal subunit protein uS15 from Corynebacterium glutamicum (strain R).